The chain runs to 149 residues: uncharacterized protein (149 aa).

2 disordered regions span residues 24–74 (TSQG…NDLE) and 129–149 (AIQD…PRAP). The span at 28–42 (EDVKPEPKPEVDEKV) shows a compositional bias: basic and acidic residues. The stretch at 102–131 (SELESLKEKVSSATSMEELREIMEEFRAIQ) forms a coiled coil.

This is an uncharacterized protein from Archaeoglobus fulgidus (strain ATCC 49558 / DSM 4304 / JCM 9628 / NBRC 100126 / VC-16).